The chain runs to 811 residues: Beta-catenin homolog sys-1 (811 aa).

Residues 1 to 105 (MHSTGEPQRG…SRGPAAPAQN (105 aa)) form a disordered region. The segment covering 64 to 103 (QQQQMTPQALSTQQQQQVQQQQQRQLYSSPSPSRGPAAPA) has biased composition (low complexity).

As to quaternary structure, interacts with TCF transcription factor pop-1 (via N-terminal region); interaction is direct.

Its subcellular location is the nucleus. The protein resides in the cytoplasm. It localises to the cytoplasmic granule. It is found in the cytoskeleton. The protein localises to the microtubule organizing center. Its subcellular location is the centrosome. The protein resides in the chromosome. It localises to the centromere. It is found in the kinetochore. Functionally, transcription coregulator. Part of the Wnt signaling asymmetry pathway, probably acting downstream of putative frizzled ligand mom-2, Wnt/frizzled receptors lin-17 and mom-5, and dishevelled homolog dsh-2. Activates or represses target gene expression, depending on upstream Wnt signals and interactions with transcription factors, such as pop-1. Required for the activation of Wnt-responsive genes in the E blastomere; thereby leading to a role in endoderm specification and gut development. Reciprocal distribution patterns of sys-1 and pop-1/TCF in the daughters of anterior-posterior cell divisions functions in specifying cell fate; a higher sys-1 to pop-1 ratio promotes the posterior cell fate, whereas a low sys-1 to pop-1 ratio promotes the anterior fate. Represses expression of homeobox ttx-3 in neuroblasts of the SIAD/SIBV lineage, perhaps acting by blocking its transcriptional activation by a complex consisting of ref-2 and pop-1. Required for early organization of the hermaphrodite, but not the male, gonad; involved in generation of regulatory cells, known as the distal tip cells (DTC), and in formation of the somatic gonadal primordium. Involved in regulating asymmetric divisions of the somatic gonadal precursor cells (SGP), Z1 and Z4. The protein is Beta-catenin homolog sys-1 of Caenorhabditis elegans.